The chain runs to 258 residues: 6-carboxyhexanoate--CoA ligase (258 aa).

The protein belongs to the BioW family. As to quaternary structure, homodimer. It depends on Mg(2+) as a cofactor.

The enzyme catalyses heptanedioate + ATP + CoA = 6-carboxyhexanoyl-CoA + AMP + diphosphate. It functions in the pathway metabolic intermediate metabolism; pimeloyl-CoA biosynthesis; pimeloyl-CoA from pimelate: step 1/1. In terms of biological role, catalyzes the transformation of pimelate into pimeloyl-CoA with concomitant hydrolysis of ATP to AMP. The polypeptide is 6-carboxyhexanoate--CoA ligase (Bacillus atrophaeus (strain 1942)).